The primary structure comprises 300 residues: N-acetylmuramic acid 6-phosphate etherase 1 (300 aa).

The 164-residue stretch at 57 to 220 folds into the SIS domain; that stretch reads IATAFAQGGR…TTGAMIKSGK (164 aa). Glu85 (proton donor) is an active-site residue. Residue Glu116 is part of the active site.

It belongs to the GCKR-like family. MurNAc-6-P etherase subfamily. Homodimer.

The catalysed reaction is N-acetyl-D-muramate 6-phosphate + H2O = N-acetyl-D-glucosamine 6-phosphate + (R)-lactate. It functions in the pathway amino-sugar metabolism; 1,6-anhydro-N-acetylmuramate degradation. Its pathway is amino-sugar metabolism; N-acetylmuramate degradation. It participates in cell wall biogenesis; peptidoglycan recycling. Functionally, specifically catalyzes the cleavage of the D-lactyl ether substituent of MurNAc 6-phosphate, producing GlcNAc 6-phosphate and D-lactate. Together with AnmK, is also required for the utilization of anhydro-N-acetylmuramic acid (anhMurNAc) either imported from the medium or derived from its own cell wall murein, and thus plays a role in cell wall recycling. This is N-acetylmuramic acid 6-phosphate etherase 1 from Vibrio cholerae serotype O1 (strain ATCC 39315 / El Tor Inaba N16961).